We begin with the raw amino-acid sequence, 37 residues long: Protease 2 large chain (37 aa).

Over residues 1-14 the composition is skewed to basic and acidic residues; it reads NDGNGRDSDPHDPG. The interval 1-37 is disordered; sequence NDGNGRDSDPHDPGDWTTAGQCGLWQPARNSQHWTLV. Positions 28–37 are enriched in polar residues; that stretch reads ARNSQHWTLV.

It belongs to the peptidase S8 family. In terms of assembly, heterodimer of a large and a small chain.

It localises to the secreted. This chain is Protease 2 large chain, found in Achromobacter lyticus.